The chain runs to 426 residues: Inhibin beta A chain (426 aa).

Positions 1-20 (MPLLWLRGFLLASCWIIVRS) are cleaved as a signal peptide. Residues 21–310 (SPTPGSEGHS…EDHPHRRRRR (290 aa)) constitute a propeptide that is removed on maturation. N-linked (GlcNAc...) asparagine glycosylation is present at asparagine 165. Residues 259–288 (KKKKKEEEGEGKKKGGGEGGAGADEEKEQS) form a disordered region. The segment covering 263-274 (KEEEGEGKKKGG) has biased composition (basic and acidic residues). 4 cysteine pairs are disulfide-bonded: cysteine 314–cysteine 322, cysteine 321–cysteine 391, cysteine 350–cysteine 423, and cysteine 354–cysteine 425.

Belongs to the TGF-beta family. As to quaternary structure, dimeric, linked by one or more disulfide bonds. Inhibin A is a dimer of alpha/INHA and beta-A/INHBA. Activin A is a homodimer of beta-A/INHBA. Activin AB is a dimer of beta-A/INHBA and beta-B/INHBB. Interacts with FST and FSTL3; these interactions prevent activin A interaction to its type II receptor. Activin A interacts with ACVR2A. Activin A interacts with BMPR2. Inhibin A interacts with ACVR1; this interaction creates a non-signaling complex (NSC) that inhibits ACVR1-mediated BMP signaling. Inhibin A interacts with ACVR2A.

Its subcellular location is the secreted. Inhibins/activins are involved in regulating a number of diverse functions such as hypothalamic and pituitary hormone secretion, gonadal hormone secretion, germ cell development and maturation, erythroid differentiation, insulin secretion, nerve cell survival, embryonic axial development or bone growth, depending on their subunit composition. Functionally, activin A is a homodimer of INHBA that plays a role in several essential biological processes including embryonic development, stem cell maintenance and differentiation, haematopoiesis, cell proliferation and tissue fibrosis. Signals through type I (such as ACVR1B or ACVR1C) and type II receptors (such as ACVR2A, ACVR2B or BMPR2) which, upon ligand binding, phosphorylate SMAD2 and SMAD3 intracellular signaling mediators that form a complex with SMAD4, translocate to the nucleus and modulate gene expression. Can also activate alternative non-canonical intracellular signaling pathways including the p38 MAPK, extracellular signal-regulated kinases 1/2 (ERK1/2) and c-Jun N-terminal kinases (JNKs) to modulate cell migration and differentiation. Alternatively, promotes osteoblastic differentiation via ACVRL1-SMAD1/5/9 pathway. In addition, can engage the type I receptor ACVR1 to form an ACVR1-activin A-type II receptor non-signaling complex (NSC) that renders receptors unavailable for engagement with BMPs, hence resulting in an apparent inhibition of ACVR1-mediated BMP signaling. Its function is as follows. Inhibin A is a dimer of alpha/INHA and beta-A/INHBA that functions as a feedback regulator in the hypothalamic-pituitary-gonadal (HPG) axis. Inhibits the secretion of FSH from the anterior pituitary gland by acting on pituitary gonadotrope cells. Antagonizes activin A by binding to the proteoglycan, betaglycan, and forming a stable complex with and, thereby, sequestering type II activin receptors while excluding type I receptor. This Homo sapiens (Human) protein is Inhibin beta A chain (INHBA).